We begin with the raw amino-acid sequence, 538 residues long: indole-2-monooxygenase (538 aa).

A helical transmembrane segment spans residues 22 to 42; it reads ALLLAIPFSLLLLPLLLRYLA. Residue cysteine 481 coordinates heme.

The protein belongs to the cytochrome P450 family. Requires heme as cofactor.

The protein localises to the membrane. The enzyme catalyses indole + reduced [NADPH--hemoprotein reductase] + O2 = indolin-2-one + oxidized [NADPH--hemoprotein reductase] + H2O + H(+). The protein operates within secondary metabolite biosynthesis; 2,4-dihydroxy-1,4-benzoxazin-3-one biosynthesis; 2,4-dihydroxy-1,4-benzoxazin-3-one from indoleglycerol phosphate: step 2/5. Catalyzes the conversion of indole to indolin-2-one. This chain is indole-2-monooxygenase (CYP71C4), found in Zea mays (Maize).